A 311-amino-acid polypeptide reads, in one-letter code: Taste receptor type 2 member 40 (311 aa).

At 1 to 9 (MSSLFSSFC) the chain is on the extracellular side. The helical transmembrane segment at 10 to 30 (LVIAIFESVVGLLGNGTIVAV) threads the bilayer. The Cytoplasmic portion of the chain corresponds to 31 to 55 (SSTSCIRSKILSSYDVIVIFLSLSR). The helical transmembrane segment at 56–76 (FFLQLWMILDFLLIFFCQPSY) threads the bilayer. The Extracellular segment spans residues 77–87 (YEENLFVTFKT). Residues 88 to 108 (VFIFLNSYSFWFAAWLSVFYC) traverse the membrane as a helical segment. Topologically, residues 109-128 (VKVASFTQSFLSWLKQRIAS) are cytoplasmic. A helical membrane pass occupies residues 129 to 149 (LIPWMLITSSLFSFATSLPFF). At 150–178 (WDSYNAHSNFTTPLTMTNSSKRITTRKTN) the chain is on the extracellular side. Residues 179 to 199 (LIFLILLCNVGIALPSIMLVF) form a helical membrane-spanning segment. The Cytoplasmic portion of the chain corresponds to 200-235 (SSILLIRSLWRHTRQMQNNATGFRDPSLEALIGAIK). The helical transmembrane segment at 236 to 256 (TVFSFLLLYITNFIALILILS) threads the bilayer. Over 257-266 (DTFVPLSTEE) the chain is Extracellular. The chain crosses the membrane as a helical span at residues 267-287 (AICVVVVAACPAGQSMVLIWS). Residues 288-311 (NPRFRELLSSILHYVNSCVRARCS) are Cytoplasmic-facing.

The protein belongs to the G-protein coupled receptor T2R family. In terms of tissue distribution, expressed in the oral cavity, as well as in the gastrointestinal tract, including in the upper palate, tongue, proventriculus, ventriculus, duodenum, jejunum, ileum, cecum and colon.

Its subcellular location is the cell membrane. In terms of biological role, bitter taste receptor. Binds quinine, dextromethorphan, diphenhydramine, diphenidol, chlorpheniramine, diphenidol, chloramphenicol, chloroquine and coumarin, this latter being a weak agonist, as well as epiquinidine, ethylhydrocupreine and quinidine. This is Taste receptor type 2 member 40 (TAS2R40) from Gallus gallus (Chicken).